The primary structure comprises 175 residues: Ribosome maturation factor RimM (175 aa).

The 73-residue stretch at 94–166 folds into the PRC barrel domain; the sequence is SDSWYEHELI…FIRLVPPGGL (73 aa).

It belongs to the RimM family. In terms of assembly, binds ribosomal protein uS19.

It is found in the cytoplasm. Functionally, an accessory protein needed during the final step in the assembly of 30S ribosomal subunit, possibly for assembly of the head region. Essential for efficient processing of 16S rRNA. May be needed both before and after RbfA during the maturation of 16S rRNA. It has affinity for free ribosomal 30S subunits but not for 70S ribosomes. The protein is Ribosome maturation factor RimM of Renibacterium salmoninarum (strain ATCC 33209 / DSM 20767 / JCM 11484 / NBRC 15589 / NCIMB 2235).